The sequence spans 141 residues: ATP synthase epsilon chain (141 aa).

This sequence belongs to the ATPase epsilon chain family. As to quaternary structure, F-type ATPases have 2 components, CF(1) - the catalytic core - and CF(0) - the membrane proton channel. CF(1) has five subunits: alpha(3), beta(3), gamma(1), delta(1), epsilon(1). CF(0) has three main subunits: a, b and c.

It is found in the cell inner membrane. Functionally, produces ATP from ADP in the presence of a proton gradient across the membrane. The polypeptide is ATP synthase epsilon chain (Bordetella petrii (strain ATCC BAA-461 / DSM 12804 / CCUG 43448)).